The sequence spans 351 residues: Probable sugar phosphate/phosphate translocator At5g11230 (351 aa).

10 helical membrane-spanning segments follow: residues 15 to 35 (IVLS…VIVY), 49 to 69 (FPIS…FLII), 89 to 109 (VVPI…AYIY), 113 to 133 (SFIQ…GVLF), 141 to 161 (DTMM…YGEA), 165 to 185 (VWGV…LVLI), 205 to 225 (VAPC…FPVL), 236 to 256 (AIFG…FLLV), 263 to 283 (TMNV…WSVI), and 286 to 306 (TVTP…AYYN). Residues 38–156 (YILDKKMYNW…LSISFGVAIA (119 aa)) form the EamA domain. Residues 321-351 (KKIQQADEESGRLLEEREGDVEGKKNDQSGN) form a disordered region.

The protein belongs to the TPT transporter family. TPT (TC 2.A.7.9) subfamily.

The protein localises to the membrane. This chain is Probable sugar phosphate/phosphate translocator At5g11230, found in Arabidopsis thaliana (Mouse-ear cress).